A 738-amino-acid chain; its full sequence is MKGFKLSCTASNSNRSTPACSPILRKRSRSPTPQNQDGDTMVEKGSDHSSDKSPSTPEQGVQRSCSSQSGRSGGKNSKKSQSWYNVLSPTYKQRNEDFRKLFKQLPDTERLIVDYSCALQRDILLQGRLYLSENWICFYSNIFRWETLLTVRLKDICSMTKEKTARLIPNAIQVCTDSEKHFFTSFGARDRTYMMMFRLWQNALLEKPLCPKELWHFVHQCYGNELGLTSDDEDYVPPDDDFNTMGYCEEIPIEENEVNDSSSKSSIETKPDASPQLPKKSITNSTLTSTGSSEAPVSFDGLPLEEEVMEGDGSLEKELAIDNIIGEKIEIMAPVTSPSLDFNDNEDIPTELSDSSDTHDEGEVQAFYEDLSGRQYVNEVFNFSVDKLYDLLFTNSPFLRDFMEQRRFSDIIFHPWKKEENGNQSRVILYTITLTNPLAPKTATVRETQTMYKASQESECYVIDAEVLTHDVPYHDYFYTINRYTLTRVARNKSRLRVSTELRYRKQPWGFVKTFIEKNFWSGLEDYFRHLETELTKTESTYLAEIHRQSPKEKASKSSAVRRRKRPHAHLRVPHLEEVMSPVTTPTDEDVGHRIKHVAGSTQTRHIPEDTPDGFHLQSVSKLLLVISCVICFSLVLLVVLNMMLFYKLWMLEYTTQTLTAWQGLRLQERLPQSQTEWAQLLESQQKYHDTELQKWREIIKSSVLLLDQMKDSLINLQNGIRSRDYTAESDEKRNRYH.

The tract at residues 1–81 (MKGFKLSCTA…SGGKNSKKSQ (81 aa)) is disordered. Over residues 8–19 (CTASNSNRSTPA) the composition is skewed to polar residues. Phosphoserine is present on residues Ser-28 and Ser-30. Residues 41 to 51 (MVEKGSDHSSD) are compositionally biased toward basic and acidic residues. Over residues 59–70 (QGVQRSCSSQSG) the composition is skewed to low complexity. Residues 96-163 (EDFRKLFKQL…KDICSMTKEK (68 aa)) form the GRAM domain. Residues 254–299 (EENEVNDSSSKSSIETKPDASPQLPKKSITNSTLTSTGSSEAPVSF) form a disordered region. The span at 259 to 268 (NDSSSKSSIE) shows a compositional bias: polar residues. Ser-274 bears the Phosphoserine mark. Polar residues predominate over residues 281-295 (SITNSTLTSTGSSEA). Positions 372-543 (SGRQYVNEVF…ELTKTESTYL (172 aa)) constitute a VASt domain. Tyr-389 carries the post-translational modification Phosphotyrosine. Phosphoserine occurs at positions 550 and 581. 3 positions are modified to phosphothreonine: Thr-584, Thr-585, and Thr-587. The helical transmembrane segment at 623–643 (LLLVISCVICFSLVLLVVLNM) threads the bilayer.

As to expression, highly expressed in the adrenal gland (at protein level) and brain. Also found in the kidney, testis and macrophages.

It localises to the endoplasmic reticulum membrane. It is found in the cell membrane. Cholesterol transporter that mediates non-vesicular transport of cholesterol from the plasma membrane (PM) to the endoplasmic reticulum (ER). Contains unique domains for binding cholesterol and the PM, thereby serving as a molecular bridge for the transfer of cholesterol from the PM to the ER. Plays a crucial role in cholesterol homeostasis in the adrenal gland and has the unique ability to localize to the PM based on the level of membrane cholesterol. In lipid-poor conditions localizes to the ER membrane and in response to excess cholesterol in the PM is recruited to the endoplasmic reticulum-plasma membrane contact sites (EPCS) which is mediated by the GRAM domain. At the EPCS, the sterol-binding VASt/ASTER domain binds to the cholesterol in the PM and facilitates its transfer from the PM to ER. The polypeptide is Protein Aster-B (Gramd1b) (Mus musculus (Mouse)).